A 131-amino-acid polypeptide reads, in one-letter code: Large ribosomal subunit protein uL24 (131 aa).

It belongs to the universal ribosomal protein uL24 family. In terms of assembly, part of the 50S ribosomal subunit.

Functionally, one of two assembly initiator proteins, it binds directly to the 5'-end of the 23S rRNA, where it nucleates assembly of the 50S subunit. Located at the polypeptide exit tunnel on the outside of the subunit. The sequence is that of Large ribosomal subunit protein uL24 from Korarchaeum cryptofilum (strain OPF8).